The chain runs to 173 residues: MTYFVVFLGLCFVLGGLAVASNPSPYYGVVGLVLASVAGCGWLLSLGVSFVSLVLFMVYLGGMLVVFVYSVSLAADPFPEAWGDWGVVGYGMSFIVVLVVGVVVGGFVEGWDFGVVTVDSAGVFFARLDFSGVAMFYSCGVGMFLVAGWGLLLTLFVVLELVRGLSRGAIRAV.

6 consecutive transmembrane segments (helical) span residues 1-21 (MTYF…AVAS), 27-47 (YGVV…LSLG), 48-68 (VSFV…VVFV), 87-107 (VVGY…VGGF), 113-133 (FGVV…FSGV), and 139-159 (CGVG…FVVL).

It belongs to the complex I subunit 6 family.

Its subcellular location is the mitochondrion membrane. It carries out the reaction a ubiquinone + NADH + 5 H(+)(in) = a ubiquinol + NAD(+) + 4 H(+)(out). Core subunit of the mitochondrial membrane respiratory chain NADH dehydrogenase (Complex I) that is believed to belong to the minimal assembly required for catalysis. Complex I functions in the transfer of electrons from NADH to the respiratory chain. The immediate electron acceptor for the enzyme is believed to be ubiquinone. The chain is NADH-ubiquinone oxidoreductase chain 6 (MT-ND6) from Cepphus grylle (Black guillemot).